The primary structure comprises 435 residues: Indole diterpene prenyltransferase atmD (435 aa).

Residues 81 to 82 (AY) and E90 contribute to the L-tryptophan site. Positions 103, 190, 261, 263, 265, 346, and 413 each coordinate substrate.

This sequence belongs to the tryptophan dimethylallyltransferase family.

Functionally, indole diterpene prenyltransferase; part of the ATM2 gene cluster that mediates the biosynthesis of aflatrem, a tremorgenic mycotoxin with acute neurotoxic effects. Synthesis of geranylgeranyl diphosphate (GGPP) by AtmG (a GGPP synthase) precedes condensation of GGPP with indole 3-glycerol phosphate, followed by epoxidation and cyclization by AtmM (a FAD-dependent monooxygenase) and AtmC (a prenyltransferase) to produce paspaline. AtmB is also essential for paspaline production, but its exact role has not been identified yet. AtmP, a cytochrome P450 monooxygenase, subsequently converts paspaline to 13-desoxypaxilline via PC-M6 by removal of the C-30 methyl group and oxidation at C-10. AtmQ, a cytochrome P450 monooxygenase, then catalyzes the oxidation of 13-desoxypaxilline, first at C-7 to produce paspalicine and then at C-13 to form paspalinine. Finally, AtmD prenylates paspalinine to form aflatrem. The chain is Indole diterpene prenyltransferase atmD from Aspergillus flavus.